The sequence spans 210 residues: UPF0301 protein OCAR_7326/OCA5_c07920 (210 aa).

It belongs to the UPF0301 (AlgH) family.

This is UPF0301 protein OCAR_7326/OCA5_c07920 from Afipia carboxidovorans (strain ATCC 49405 / DSM 1227 / KCTC 32145 / OM5) (Oligotropha carboxidovorans).